Consider the following 456-residue polypeptide: Histidine--tRNA ligase (456 aa).

It belongs to the class-II aminoacyl-tRNA synthetase family. In terms of assembly, homodimer.

The protein resides in the cytoplasm. It carries out the reaction tRNA(His) + L-histidine + ATP = L-histidyl-tRNA(His) + AMP + diphosphate + H(+). The protein is Histidine--tRNA ligase of Borrelia garinii subsp. bavariensis (strain ATCC BAA-2496 / DSM 23469 / PBi) (Borreliella bavariensis).